The chain runs to 319 residues: uncharacterized protein (319 aa).

Residues 29-164 (VNISSLALLK…LDAFRSVNPL (136 aa)) enclose the MPN domain. Positions 111, 113, and 124 each coordinate Zn(2+). Residues 111–124 (HSHPGFGCWLSSVD) carry the JAMM motif motif.

The protein belongs to the peptidase M67A family.

This is an uncharacterized protein from Caenorhabditis elegans.